The sequence spans 713 residues: Vacuolar amino acid transporter 4 (713 aa).

The interval 1–33 is disordered; that stretch reads MVTNNGDGEHLGIRRNGNLRHPSNNMKIPRRAQ. The Vacuolar segment spans residues 1-242; that stretch reads MVTNNGDGEH…IDKVPFLTRN (242 aa). Over residues 21–33 the composition is skewed to polar residues; it reads HPSNNMKIPRRAQ. Ser88 bears the Phosphoserine mark. The tract at residues 99–121 is disordered; that stretch reads RSSVSHGNEAIPRVNPTKNSSAS. Residues Ser130 and Ser165 each carry the phosphoserine modification. Positions 200 to 233 are disordered; that stretch reads KRQEHQLNDSASSDFTSHESDSINQSSPSSNQDI. Over residues 221–231 the composition is skewed to low complexity; it reads SINQSSPSSNQ. The helical transmembrane segment at 243–263 threads the bilayer; that stretch reads FLEFLYVFGHFAGESFEDDFI. Residues 264–301 are Cytoplasmic-facing; it reads PDSSNMMIRGEDERSALLSRPDHMKVLPSAKGTTSTKK. The helical transmembrane segment at 302–322 threads the bilayer; that stretch reads VFLILLKSFIGTGVLFLPNAF. The Vacuolar segment spans residues 323 to 326; that stretch reads HNGG. A helical membrane pass occupies residues 327–347; sequence LFFSVSMLAFFGIYSYWCYYI. The Cytoplasmic segment spans residues 348 to 373; it reads LVQAKSSCGVSSFGDIGLKLYGPWMR. A helical transmembrane segment spans residues 374–394; sequence IIILFSLVITQVGFSGAYMIF. At 395–410 the chain is on the vacuolar side; that stretch reads TAKNLQAFLDNVFHVG. Residues 411–431 traverse the membrane as a helical segment; it reads VLPLSYLMVFQTIIFIPLSFI. The Cytoplasmic portion of the chain corresponds to 432–438; the sequence is RNISKLS. Residues 439-459 form a helical membrane-spanning segment; it reads LPSLLANFFIMAGLVIVIIFT. Over 460–483 the chain is Vacuolar; sequence AKRLFFDLMGTPAMGVVYGLNADR. The helical transmembrane segment at 484–504 threads the bilayer; that stretch reads WTLFIGTAIFAFEGIGLIIPV. The Cytoplasmic segment spans residues 505–515; it reads QDSMRNPEKFP. The helical transmembrane segment at 516–536 threads the bilayer; it reads LVLALVILTATILFISIATLG. Topologically, residues 537–561 are vacuolar; that stretch reads YLAYGSNVQTVILLNLPQSNIFVNL. A helical membrane pass occupies residues 562–582; it reads IQLFYSIAIMLSTPLQLFPAI. Over 583-621 the chain is Cytoplasmic; sequence KIIENKFFPKFTKIYVKHDDLTTRVELRPNSGKLNWKIK. Residues 622–642 traverse the membrane as a helical segment; the sequence is WLKNFIRSIIVIIVVSIAYFG. Over 643 to 648 the chain is Vacuolar; it reads SDNLDK. A helical transmembrane segment spans residues 649–669; it reads FVSVIGSLACIPLVYIYPSML. Over 670–692 the chain is Cytoplasmic; it reads HLRGNSLPETKGEFWRFKPMLDT. The helical transmembrane segment at 693–711 threads the bilayer; sequence ILIFFGIASMLYTSYQSIF. Residues 712–713 lie on the Vacuolar side of the membrane; sequence GV.

Belongs to the amino acid/polyamine transporter 2 family.

It is found in the vacuole membrane. Involved in amino acid efflux from the vacuole to the cytoplasm. Capable of transporting large neutral amino acids including tyrosine, glutamine, asparagine, isoleucine and leucine. The protein is Vacuolar amino acid transporter 4 (AVT4) of Saccharomyces cerevisiae (strain ATCC 204508 / S288c) (Baker's yeast).